We begin with the raw amino-acid sequence, 269 residues long: Triosephosphate isomerase (269 aa).

N8–K10 contacts substrate. The active-site Electrophile is H105. The active-site Proton acceptor is E183. Residues G189, S227, and G248 to G249 contribute to the substrate site.

It belongs to the triosephosphate isomerase family. In terms of assembly, homodimer.

It localises to the cytoplasm. The enzyme catalyses D-glyceraldehyde 3-phosphate = dihydroxyacetone phosphate. Its pathway is carbohydrate biosynthesis; gluconeogenesis. It participates in carbohydrate degradation; glycolysis; D-glyceraldehyde 3-phosphate from glycerone phosphate: step 1/1. Its function is as follows. Involved in the gluconeogenesis. Catalyzes stereospecifically the conversion of dihydroxyacetone phosphate (DHAP) to D-glyceraldehyde-3-phosphate (G3P). The chain is Triosephosphate isomerase from Psychrobacter arcticus (strain DSM 17307 / VKM B-2377 / 273-4).